The following is a 112-amino-acid chain: MASIMYTPKDIFEQEFKSSMRGYDKKEVDEFLDDIIKDYETYISTIEELRQENTRLKEEVKQAKKRQEAAQTTVSPAASVSSSRVATTATNFDILKRISRLEKEVFGKQITE.

The stretch at 32–75 (LDDIIKDYETYISTIEELRQENTRLKEEVKQAKKRQEAAQTTVS) forms a coiled coil.

Belongs to the GpsB family. In terms of assembly, forms polymers through the coiled coil domains. Interacts with PBP1, MreC and EzrA.

It is found in the cytoplasm. Its function is as follows. Divisome component that associates with the complex late in its assembly, after the Z-ring is formed, and is dependent on DivIC and PBP2B for its recruitment to the divisome. Together with EzrA, is a key component of the system that regulates PBP1 localization during cell cycle progression. Its main role could be the removal of PBP1 from the cell pole after pole maturation is completed. Also contributes to the recruitment of PBP1 to the division complex. Not essential for septum formation. The chain is Cell cycle protein GpsB from Streptococcus mutans serotype c (strain ATCC 700610 / UA159).